The primary structure comprises 397 residues: Tryptophan synthase beta chain (397 aa).

Lys87 is subject to N6-(pyridoxal phosphate)lysine.

It belongs to the TrpB family. As to quaternary structure, tetramer of two alpha and two beta chains. It depends on pyridoxal 5'-phosphate as a cofactor.

It carries out the reaction (1S,2R)-1-C-(indol-3-yl)glycerol 3-phosphate + L-serine = D-glyceraldehyde 3-phosphate + L-tryptophan + H2O. It participates in amino-acid biosynthesis; L-tryptophan biosynthesis; L-tryptophan from chorismate: step 5/5. The beta subunit is responsible for the synthesis of L-tryptophan from indole and L-serine. The sequence is that of Tryptophan synthase beta chain from Cronobacter sakazakii (strain ATCC BAA-894) (Enterobacter sakazakii).